The following is a 195-amino-acid chain: Imidazoleglycerol-phosphate dehydratase (195 aa).

Belongs to the imidazoleglycerol-phosphate dehydratase family.

Its subcellular location is the cytoplasm. The catalysed reaction is D-erythro-1-(imidazol-4-yl)glycerol 3-phosphate = 3-(imidazol-4-yl)-2-oxopropyl phosphate + H2O. It participates in amino-acid biosynthesis; L-histidine biosynthesis; L-histidine from 5-phospho-alpha-D-ribose 1-diphosphate: step 6/9. In Cereibacter sphaeroides (strain ATCC 17029 / ATH 2.4.9) (Rhodobacter sphaeroides), this protein is Imidazoleglycerol-phosphate dehydratase.